Reading from the N-terminus, the 111-residue chain is U-scoloptoxin(16)-Sm2a (111 aa).

The signal sequence occupies residues 1–28 (MCAKPNHLFVTVTFIFGFAVCIVQISAW).

This sequence belongs to the scoloptoxin-16 family. Contains 4 disulfide bonds. Expressed by the venom gland.

It is found in the secreted. The sequence is that of U-scoloptoxin(16)-Sm2a from Scolopendra morsitans (Tanzanian blue ringleg centipede).